The chain runs to 104 residues: Large ribosomal subunit protein bL21 (104 aa).

This sequence belongs to the bacterial ribosomal protein bL21 family. In terms of assembly, part of the 50S ribosomal subunit. Contacts protein L20.

This protein binds to 23S rRNA in the presence of protein L20. The polypeptide is Large ribosomal subunit protein bL21 (Gluconacetobacter diazotrophicus (strain ATCC 49037 / DSM 5601 / CCUG 37298 / CIP 103539 / LMG 7603 / PAl5)).